The primary structure comprises 502 residues: ATP synthase subunit alpha (502 aa).

169–176 (GDRQTGKT) contributes to the ATP binding site.

Belongs to the ATPase alpha/beta chains family. In terms of assembly, F-type ATPases have 2 components, CF(1) - the catalytic core - and CF(0) - the membrane proton channel. CF(1) has five subunits: alpha(3), beta(3), gamma(1), delta(1), epsilon(1). CF(0) has three main subunits: a(1), b(2) and c(9-12). The alpha and beta chains form an alternating ring which encloses part of the gamma chain. CF(1) is attached to CF(0) by a central stalk formed by the gamma and epsilon chains, while a peripheral stalk is formed by the delta and b chains.

Its subcellular location is the cell inner membrane. It carries out the reaction ATP + H2O + 4 H(+)(in) = ADP + phosphate + 5 H(+)(out). Its function is as follows. Produces ATP from ADP in the presence of a proton gradient across the membrane. The alpha chain is a regulatory subunit. This chain is ATP synthase subunit alpha, found in Geotalea daltonii (strain DSM 22248 / JCM 15807 / FRC-32) (Geobacter daltonii).